The chain runs to 860 residues: Leucine--tRNA ligase (860 aa).

The 'HIGH' region signature appears at 42–52; sequence PYPSGRLHMGH. Positions 619–623 match the 'KMSKS' region motif; sequence KMSKS. ATP is bound at residue Lys-622.

It belongs to the class-I aminoacyl-tRNA synthetase family.

Its subcellular location is the cytoplasm. It catalyses the reaction tRNA(Leu) + L-leucine + ATP = L-leucyl-tRNA(Leu) + AMP + diphosphate. The polypeptide is Leucine--tRNA ligase (Salmonella typhimurium (strain LT2 / SGSC1412 / ATCC 700720)).